The following is a 320-amino-acid chain: Delta(7)-sterol 5(6)-desaturase erg3C (320 aa).

The next 3 helical transmembrane spans lie at valine 43–alanine 63, serine 91–valine 111, and proline 127–isoleucine 147. One can recognise a Fatty acid hydroxylase domain in the interval isoleucine 134–serine 283. The short motif at histidine 148–histidine 152 is the Histidine box-1 element. A Histidine box-2 motif is present at residues histidine 161–histidine 165. Residues tyrosine 224–isoleucine 244 form a helical membrane-spanning segment. A Histidine box-3 motif is present at residues histidine 259–histidine 263.

The protein belongs to the sterol desaturase family. It depends on Fe cation as a cofactor.

Its subcellular location is the endoplasmic reticulum membrane. Delta(7)-sterol 5(6)-desaturase; part of the third module of ergosterol biosynthesis pathway that includes the late steps of the pathway. Erg3C is a minor delta(7)-sterol 5(6)-desaturase within the ergosterol pathway, erg3B being the major one. The third module or late pathway involves the ergosterol synthesis itself through consecutive reactions that mainly occur in the endoplasmic reticulum (ER) membrane. Firstly, the squalene synthase erg9 catalyzes the condensation of 2 farnesyl pyrophosphate moieties to form squalene, which is the precursor of all steroids. Squalene synthase is crucial for balancing the incorporation of farnesyl diphosphate (FPP) into sterol and nonsterol isoprene synthesis. Secondly, squalene is converted into lanosterol by the consecutive action of the squalene epoxidase erg1 and the lanosterol synthase erg7. Then, the delta(24)-sterol C-methyltransferase erg6 methylates lanosterol at C-24 to produce eburicol. Eburicol is the substrate of the sterol 14-alpha demethylase encoded by cyp51A and cyp51B, to yield 4,4,24-trimethyl ergosta-8,14,24(28)-trienol. The C-14 reductase erg24 then reduces the C14=C15 double bond which leads to 4,4-dimethylfecosterol. A sequence of further demethylations at C-4, involving the C-4 demethylation complex containing the C-4 methylsterol oxidases erg25A or erg25B, the sterol-4-alpha-carboxylate 3-dehydrogenase erg26 and the 3-keto-steroid reductase erg27, leads to the production of fecosterol via 4-methylfecosterol. The C-8 sterol isomerase erg2 then catalyzes the reaction which results in unsaturation at C-7 in the B ring of sterols and thus converts fecosterol to episterol. The sterol-C5-desaturase erg3B then catalyzes the introduction of a C-5 double bond in the B ring to produce 5-dehydroepisterol. The 2 other sterol-C5-desaturases, erg3A and erg3C, seem to be less important in ergosterol biosynthesis. The C-22 sterol desaturase erg5 further converts 5-dehydroepisterol into ergosta-5,7,22,24(28)-tetraen-3beta-ol by forming the C-22(23) double bond in the sterol side chain. Finally, ergosta-5,7,22,24(28)-tetraen-3beta-ol is substrate of the C-24(28) sterol reductases erg4A and erg4B to produce ergosterol. Possible alternative sterol biosynthetic pathways might exist from fecosterol to ergosterol, depending on the activities of the erg3 isoforms. In Aspergillus fumigatus (strain ATCC MYA-4609 / CBS 101355 / FGSC A1100 / Af293) (Neosartorya fumigata), this protein is Delta(7)-sterol 5(6)-desaturase erg3C.